Reading from the N-terminus, the 521-residue chain is NAD(P)H-quinone oxidoreductase subunit 2 (521 aa).

14 helical membrane passes run 16 to 36, 40 to 60, 80 to 100, 110 to 130, 133 to 153, 168 to 188, 212 to 232, 246 to 266, 280 to 300, 308 to 328, 336 to 356, 380 to 400, 402 to 422, and 468 to 488; these read ILPE…DLIG, VALA…GLLV, LSII…LMSV, LAEF…LSAA, LVMV…MTGY, LLIG…LYGL, LGLA…ISAV, PTPV…AVAI, WHVI…VVAL, MLAY…VAGS, VFYM…IILF, LGLS…GFFG, IYIF…LGLV, and VGIV…NPLF.

It belongs to the complex I subunit 2 family. NDH-1 can be composed of about 15 different subunits; different subcomplexes with different compositions have been identified which probably have different functions.

The protein resides in the cellular thylakoid membrane. The catalysed reaction is a plastoquinone + NADH + (n+1) H(+)(in) = a plastoquinol + NAD(+) + n H(+)(out). It carries out the reaction a plastoquinone + NADPH + (n+1) H(+)(in) = a plastoquinol + NADP(+) + n H(+)(out). Functionally, NDH-1 shuttles electrons from an unknown electron donor, via FMN and iron-sulfur (Fe-S) centers, to quinones in the respiratory and/or the photosynthetic chain. The immediate electron acceptor for the enzyme in this species is believed to be plastoquinone. Couples the redox reaction to proton translocation, and thus conserves the redox energy in a proton gradient. Cyanobacterial NDH-1 also plays a role in inorganic carbon-concentration. The polypeptide is NAD(P)H-quinone oxidoreductase subunit 2 (Synechocystis sp. (strain ATCC 27184 / PCC 6803 / Kazusa)).